A 671-amino-acid polypeptide reads, in one-letter code: UvrABC system protein B (671 aa).

One can recognise a Helicase ATP-binding domain in the interval 25-412 (EGIDAGLAHQ…AGRIVEQVVR (388 aa)). 38–45 (GVTGSGKT) contacts ATP. The Beta-hairpin signature appears at 91 to 114 (YYDYYQPEAYVPSSDTFIEKDASI). The Helicase C-terminal domain maps to 429-582 (QVDDLLSEIH…QIAFNLEHGI (154 aa)). The disordered stretch occupies residues 601 to 624 (PGSRSKKRKGMAKAAEENARYENE). Basic and acidic residues predominate over residues 614-624 (AAEENARYENE). Residues 632 to 667 (NKRIRQLEEKMYQLARDLEFEAAAQMRDEIGKLRER) form the UVR domain.

It belongs to the UvrB family. In terms of assembly, forms a heterotetramer with UvrA during the search for lesions. Interacts with UvrC in an incision complex.

Its subcellular location is the cytoplasm. Functionally, the UvrABC repair system catalyzes the recognition and processing of DNA lesions. A damage recognition complex composed of 2 UvrA and 2 UvrB subunits scans DNA for abnormalities. Upon binding of the UvrA(2)B(2) complex to a putative damaged site, the DNA wraps around one UvrB monomer. DNA wrap is dependent on ATP binding by UvrB and probably causes local melting of the DNA helix, facilitating insertion of UvrB beta-hairpin between the DNA strands. Then UvrB probes one DNA strand for the presence of a lesion. If a lesion is found the UvrA subunits dissociate and the UvrB-DNA preincision complex is formed. This complex is subsequently bound by UvrC and the second UvrB is released. If no lesion is found, the DNA wraps around the other UvrB subunit that will check the other stand for damage. This Pseudomonas syringae pv. syringae (strain B728a) protein is UvrABC system protein B.